Reading from the N-terminus, the 236-residue chain is LexA repressor (236 aa).

The H-T-H motif DNA-binding region spans 26-46 (FDEMKEALDLASKSGIHRLIT). Positions 84–107 (SPSVIEGGQGRSSPAPRPAANNDD) are disordered. Catalysis depends on for autocatalytic cleavage activity residues S157 and K195.

It belongs to the peptidase S24 family. As to quaternary structure, homodimer.

The enzyme catalyses Hydrolysis of Ala-|-Gly bond in repressor LexA.. Represses a number of genes involved in the response to DNA damage (SOS response), including recA and lexA. In the presence of single-stranded DNA, RecA interacts with LexA causing an autocatalytic cleavage which disrupts the DNA-binding part of LexA, leading to derepression of the SOS regulon and eventually DNA repair. This Chelativorans sp. (strain BNC1) protein is LexA repressor.